The primary structure comprises 448 residues: Phosphoglucosamine mutase (448 aa).

Ser-104 serves as the catalytic Phosphoserine intermediate. 4 residues coordinate Mg(2+): Ser-104, Asp-243, Asp-245, and Asp-247. Ser-104 carries the phosphoserine modification.

This sequence belongs to the phosphohexose mutase family. Mg(2+) is required as a cofactor. Post-translationally, activated by phosphorylation.

It catalyses the reaction alpha-D-glucosamine 1-phosphate = D-glucosamine 6-phosphate. In terms of biological role, catalyzes the conversion of glucosamine-6-phosphate to glucosamine-1-phosphate. The polypeptide is Phosphoglucosamine mutase (Xylella fastidiosa (strain Temecula1 / ATCC 700964)).